Here is a 197-residue protein sequence, read N- to C-terminus: Nucleoid occlusion factor SlmA (197 aa).

Positions 7–67 (INRREHILQC…GLIEFIEESL (61 aa)) constitute an HTH tetR-type domain. The H-T-H motif DNA-binding region spans 30 to 49 (TTAKLASEVGVSEAALYRHF).

It belongs to the nucleoid occlusion factor SlmA family. In terms of assembly, homodimer. Interacts with FtsZ.

The protein localises to the cytoplasm. It is found in the nucleoid. Required for nucleoid occlusion (NO) phenomenon, which prevents Z-ring formation and cell division over the nucleoid. Acts as a DNA-associated cell division inhibitor that binds simultaneously chromosomal DNA and FtsZ, and disrupts the assembly of FtsZ polymers. SlmA-DNA-binding sequences (SBS) are dispersed on non-Ter regions of the chromosome, preventing FtsZ polymerization at these regions. This chain is Nucleoid occlusion factor SlmA, found in Shewanella oneidensis (strain ATCC 700550 / JCM 31522 / CIP 106686 / LMG 19005 / NCIMB 14063 / MR-1).